The primary structure comprises 118 residues: uncharacterized protein (118 aa).

Positions 1-12 (MADDNVSFTDQG) are enriched in polar residues. The segment at 1–63 (MADDNVSFTD…KKGKTKKVRK (63 aa)) is disordered. The segment covering 39–63 (TKKKGKKNKKSKKKAKKGKTKKVRK) has biased composition (basic residues). The chain crosses the membrane as a helical span at residues 81-101 (FCAGIIVAMIMLFVIIIYGII).

The protein localises to the membrane. This is an uncharacterized protein from Caenorhabditis elegans.